Here is a 193-residue protein sequence, read N- to C-terminus: ATP-dependent Clp protease proteolytic subunit 1 (193 aa).

Serine 98 (nucleophile) is an active-site residue. Histidine 123 is a catalytic residue.

Belongs to the peptidase S14 family. Fourteen ClpP subunits assemble into 2 heptameric rings which stack back to back to give a disk-like structure with a central cavity, resembling the structure of eukaryotic proteasomes.

The protein resides in the cytoplasm. The enzyme catalyses Hydrolysis of proteins to small peptides in the presence of ATP and magnesium. alpha-casein is the usual test substrate. In the absence of ATP, only oligopeptides shorter than five residues are hydrolyzed (such as succinyl-Leu-Tyr-|-NHMec, and Leu-Tyr-Leu-|-Tyr-Trp, in which cleavage of the -Tyr-|-Leu- and -Tyr-|-Trp bonds also occurs).. Functionally, cleaves peptides in various proteins in a process that requires ATP hydrolysis. Has a chymotrypsin-like activity. Plays a major role in the degradation of misfolded proteins. This is ATP-dependent Clp protease proteolytic subunit 1 from Bacillus cereus (strain ATCC 10987 / NRS 248).